The primary structure comprises 351 residues: tRNA (guanine(26)-N(2))-dimethyltransferase (351 aa).

One can recognise a Trm1 methyltransferase domain in the interval Val-4 to Leu-350. Residues Arg-39, Arg-65, Asp-83, Asp-109, and Ala-110 each coordinate S-adenosyl-L-methionine.

It belongs to the class I-like SAM-binding methyltransferase superfamily. Trm1 family.

The enzyme catalyses guanosine(26) in tRNA + 2 S-adenosyl-L-methionine = N(2)-dimethylguanosine(26) in tRNA + 2 S-adenosyl-L-homocysteine + 2 H(+). Its function is as follows. Dimethylates a single guanine residue at position 26 of a number of tRNAs using S-adenosyl-L-methionine as donor of the methyl groups. The polypeptide is tRNA (guanine(26)-N(2))-dimethyltransferase (Pyrobaculum neutrophilum (strain DSM 2338 / JCM 9278 / NBRC 100436 / V24Sta) (Thermoproteus neutrophilus)).